The following is a 426-amino-acid chain: Glutamate-1-semialdehyde 2,1-aminomutase (426 aa).

Residue K265 is modified to N6-(pyridoxal phosphate)lysine.

The protein belongs to the class-III pyridoxal-phosphate-dependent aminotransferase family. HemL subfamily. In terms of assembly, homodimer. It depends on pyridoxal 5'-phosphate as a cofactor.

Its subcellular location is the cytoplasm. It carries out the reaction (S)-4-amino-5-oxopentanoate = 5-aminolevulinate. It participates in porphyrin-containing compound metabolism; protoporphyrin-IX biosynthesis; 5-aminolevulinate from L-glutamyl-tRNA(Glu): step 2/2. The polypeptide is Glutamate-1-semialdehyde 2,1-aminomutase (Paraburkholderia phymatum (strain DSM 17167 / CIP 108236 / LMG 21445 / STM815) (Burkholderia phymatum)).